The sequence spans 417 residues: UPF0597 protein Cphy_1256 (417 aa).

This sequence belongs to the UPF0597 family.

The chain is UPF0597 protein Cphy_1256 from Lachnoclostridium phytofermentans (strain ATCC 700394 / DSM 18823 / ISDg) (Clostridium phytofermentans).